The sequence spans 379 residues: Probable G-protein coupled receptor No18 (379 aa).

Residues 5–36 (EASITGRTAPELNASAAPLDDERELGETVAAT) lie on the Extracellular side of the membrane. Residue asparagine 17 is glycosylated (N-linked (GlcNAc...) asparagine). Residues 37 to 58 (ALLLAIILVTIVGNSLVIISVF) form a helical membrane-spanning segment. Topologically, residues 59 to 68 (TYRPLRSVQN) are cytoplasmic. A helical transmembrane segment spans residues 69–90 (FFVVSLAVADLTVALFVLPLNV). Residues 91–107 (AYRLLNQWLLGSYLCQM) are Extracellular-facing. The cysteines at positions 105 and 184 are disulfide-linked. The chain crosses the membrane as a helical span at residues 108 to 128 (WLTCDILCCTSSILNLCVIAL). Residues 129–148 (DRYWAITDPINYAQKRTIRR) lie on the Cytoplasmic side of the membrane. Residues 149-171 (VNTMIAAVWALSLVISVPPLLGW) form a helical membrane-spanning segment. Topologically, residues 172-196 (NDWPAQFTEDTPCTLTQERLFVVYS) are extracellular. A helical transmembrane segment spans residues 197 to 218 (SSGSFFIPLIIMSVVYAKIFFA). The Cytoplasmic portion of the chain corresponds to 219–303 (TKRRLRERTR…LSKERKAARV (85 aa)). Positions 234–276 (AVPAPPQRTSSRPLAELESVASQEDETEPSPEPEPLSSRADKP) are disordered. Residues 304 to 325 (LGVIMGVFVVCWLPFFLMYAIV) traverse the membrane as a helical segment. The Extracellular segment spans residues 326–340 (PFCTNCAPPSQRVVD). A helical membrane pass occupies residues 341 to 362 (FVTWLGYVNSSLNPIIYTIYNK). Residues 363–375 (DFRTAFSRLLRCD) are Cytoplasmic-facing.

It belongs to the G-protein coupled receptor 1 family.

The protein resides in the cell membrane. Functionally, probable G-protein coupled receptor for an amine. This is Probable G-protein coupled receptor No18 from Amphibalanus amphitrite (Striped barnacle).